A 124-amino-acid polypeptide reads, in one-letter code: Phycocyanin PC645 alpha-3 subunit (124 aa).

Position 71 (Arg71) interacts with (2R,3E)-phycocyanobilin. Residues Cys73, Tyr81, and Lys97 each contribute to the mesobiliverdin site.

The protein belongs to the phycoerythrin family. Heterotetramer of 2 different alpha chains and 2 identical beta chains which form 2 alpha-beta heterodimers within the heterotetramer. Post-translationally, contains one phycocyanobilin chromophore and one mesobiliverdin chromophore with binding mediated by both the alpha and beta subunits.

It localises to the plastid. Its subcellular location is the chloroplast thylakoid membrane. In terms of biological role, light-harvesting photosynthetic tetrapyrrole chromophore-protein from the phycobiliprotein complex. The polypeptide is Phycocyanin PC645 alpha-3 subunit (Chroomonas sp. (strain CCMP270)).